A 578-amino-acid chain; its full sequence is Glutamate--tRNA ligase (578 aa).

The 'HIGH' region signature appears at 97 to 107; it reads PNPDFVIHLGN.

Belongs to the class-I aminoacyl-tRNA synthetase family. Glutamate--tRNA ligase type 2 subfamily.

Its subcellular location is the cytoplasm. The enzyme catalyses tRNA(Glu) + L-glutamate + ATP = L-glutamyl-tRNA(Glu) + AMP + diphosphate. Catalyzes the attachment of glutamate to tRNA(Glu) in a two-step reaction: glutamate is first activated by ATP to form Glu-AMP and then transferred to the acceptor end of tRNA(Glu). This Hyperthermus butylicus (strain DSM 5456 / JCM 9403 / PLM1-5) protein is Glutamate--tRNA ligase.